The chain runs to 161 residues: tRNA-acetylating toxin 1 (161 aa).

Residues leucine 92, valine 94, histidine 99, glycine 100, glycine 102, glycine 104, alanine 105, leucine 132, and glutamate 135 each coordinate acetyl-CoA. Tyrosine 140 is a catalytic residue. Histidine 142 is a binding site for acetyl-CoA.

Belongs to the acetyltransferase family. GNAT subfamily. In terms of assembly, homodimer (in absence of antitoxin). Forms a complex with cognate antitoxin TacA1. Forms a 4:2 antitoxin:toxin complex with cognate antitoxin TacA1.

It catalyses the reaction glycyl-tRNA(Gly) + acetyl-CoA = N-acetylglycyl-tRNA(Gly) + CoA + H(+). Its function is as follows. Toxic component of a type II toxin-antitoxin (TA) system. Acetylates tRNA and inhibits translation, does not acetylate uncharged tRNA. Upon expression in situ acetylates only Gly-tRNA(Gly). In vitro acetylates mainly Gly and Ile/Leu. Upon induction of the toxin gene in lag phase in rich medium (but not mid-exponential phase) the lag phase is extended by several hours, locking bacteria in a non-growth state. Neutralized only by cognate antitoxin TacA1 (A8), but not by TacA2 or TacA3. Its toxic effect is neutralized by expression of peptidyl-tRNA hydrolase (pth) in lag phase. NAD-dependent protein deacylase (cobB) also play a role in detoxifying TacT targets. Expression increases persister cell formation, which is also abolished by either cognate antitoxin or Pth expression. Plays a role in persister cell formation. The TacA1-TacT1 complex binds (and probably represses) its own promoter DNA but not that of tacA3-tacT3, it does not repress the tacA3-tacT3 promoter. This is tRNA-acetylating toxin 1 from Salmonella typhimurium (strain 14028s / SGSC 2262).